The primary structure comprises 286 residues: Soluble epoxide hydrolase (286 aa).

The AB hydrolase-1 domain occupies 26 to 123 (YPLVLLHGWP…DLVERLFILD (98 aa)). The Nucleophile role is filled by Asp99. Tyr209 acts as the Proton donor in catalysis. Residue His264 is the Proton acceptor of the active site.

This sequence belongs to the AB hydrolase superfamily. Epoxide hydrolase family. Homotetramer.

It localises to the cytoplasm. Its subcellular location is the cell membrane. It carries out the reaction an epoxide + H2O = an ethanediol. In terms of biological role, involved in catabolic degradation of epoxides. Shows highest activity towards C6 and C7 carbocyclic epoxides. Also active towards linear 1,2-epoxyalkanes. This is Soluble epoxide hydrolase from Corynebacterium sp. (strain C12).